The chain runs to 1093 residues: Protein translocase subunit SecA (1093 aa).

ATP-binding positions include Gln-84, 102–106, and Asp-491; that span reads GEGKT. 2 disordered regions span residues 837–869 and 904–1062; these read QNLQEQSYKDPASDNLENNPEPKTGSQSQSEHE and SELE…TSEA. Basic and acidic residues-rich tracts occupy residues 904–937, 944–971, and 978–1062; these read SELESKEKEQEEVKNQETQPKENKPAETKVDATK, EELKAKEVATVVEEKPKKVSKAKSEKLK, and PKDL…TSEA.

This sequence belongs to the SecA family. In terms of assembly, monomer and homodimer. Part of the essential Sec protein translocation apparatus which comprises SecA, SecYEG and auxiliary proteins SecDF. Other proteins may also be involved.

Its subcellular location is the cell membrane. The protein localises to the cytoplasm. The catalysed reaction is ATP + H2O + cellular proteinSide 1 = ADP + phosphate + cellular proteinSide 2.. Its function is as follows. Part of the Sec protein translocase complex. Interacts with the SecYEG preprotein conducting channel. Has a central role in coupling the hydrolysis of ATP to the transfer of proteins into and across the cell membrane, serving as an ATP-driven molecular motor driving the stepwise translocation of polypeptide chains across the membrane. In Mycoplasmopsis synoviae (strain 53) (Mycoplasma synoviae), this protein is Protein translocase subunit SecA.